The chain runs to 130 residues: Cuticle protein 14 isoform a (130 aa).

Residues 24 to 90 (IGNYNFGYNE…NVHTNEPGTD (67 aa)) enclose the Chitin-binding type R&amp;R domain.

This Limulus polyphemus (Atlantic horseshoe crab) protein is Cuticle protein 14 isoform a.